We begin with the raw amino-acid sequence, 275 residues long: Dermonecrotic toxin SpeSicTox-betaIIA2i (275 aa).

H5 is an active-site residue. Mg(2+) is bound by residues E25 and D27. H41 serves as the catalytic Nucleophile. Cystine bridges form between C45–C51 and C47–C190. D85 serves as a coordination point for Mg(2+).

This sequence belongs to the arthropod phospholipase D family. Class II subfamily. Mg(2+) serves as cofactor. In terms of tissue distribution, expressed by the venom gland.

The protein resides in the secreted. It catalyses the reaction an N-(acyl)-sphingosylphosphocholine = an N-(acyl)-sphingosyl-1,3-cyclic phosphate + choline. The enzyme catalyses an N-(acyl)-sphingosylphosphoethanolamine = an N-(acyl)-sphingosyl-1,3-cyclic phosphate + ethanolamine. The catalysed reaction is a 1-acyl-sn-glycero-3-phosphocholine = a 1-acyl-sn-glycero-2,3-cyclic phosphate + choline. It carries out the reaction a 1-acyl-sn-glycero-3-phosphoethanolamine = a 1-acyl-sn-glycero-2,3-cyclic phosphate + ethanolamine. Functionally, dermonecrotic toxins cleave the phosphodiester linkage between the phosphate and headgroup of certain phospholipids (sphingolipid and lysolipid substrates), forming an alcohol (often choline) and a cyclic phosphate. This toxin acts on sphingomyelin (SM). It may also act on ceramide phosphoethanolamine (CPE), lysophosphatidylcholine (LPC) and lysophosphatidylethanolamine (LPE), but not on lysophosphatidylserine (LPS), and lysophosphatidylglycerol (LPG). It acts by transphosphatidylation, releasing exclusively cyclic phosphate products as second products. Induces dermonecrosis, hemolysis, increased vascular permeability, edema, inflammatory response, and platelet aggregation. This chain is Dermonecrotic toxin SpeSicTox-betaIIA2i, found in Sicarius peruensis (Six-eyed sand spider).